Reading from the N-terminus, the 1066-residue chain is Thyrotropin-releasing hormone-degrading ectoenzyme (1066 aa).

The span at 1–14 (MALDGERGEQEEEK) shows a compositional bias: basic and acidic residues. Positions 1-43 (MALDGERGEQEEEKKKKKKKKKRKKKEEEGAEKSSSPFAATMG) are disordered. Topologically, residues 1–81 (MALDGERGEQ…ERHIAVHKRL (81 aa)) are cytoplasmic. Residues 15–25 (KKKKKKKKRKK) are compositionally biased toward basic residues. T71 carries the post-translational modification Phosphothreonine; by PKC. The chain crosses the membrane as a helical; Signal-anchor for type II membrane protein span at residues 82–102 (VLAFAVSIVALLAVTMLAVLL). Residues 103–1066 (SLRFDECGAS…FQWLGKAMRH (964 aa)) are Extracellular-facing. The segment at 118–176 (TDGGLGGFPERDSNSSFPGSARRNHHAGGESSQRESGEVGTPGTPSAQPPSEEEREQWQ) is disordered. Residues N131, N202, N217, N264, and N380 are each glycosylated (N-linked (GlcNAc...) asparagine). Position 446-450 (446-450 (AAMEN)) interacts with substrate. Position 482 (H482) interacts with Zn(2+). The active-site Proton acceptor is E483. Zn(2+) contacts are provided by H486 and E505. N-linked (GlcNAc...) asparagine glycosylation is found at N647, N676, N691, N705, N726, N842, and N948.

Belongs to the peptidase M1 family. Homodimer; disulfide-linked. Requires Zn(2+) as cofactor.

The protein resides in the membrane. The catalysed reaction is Release of the N-terminal pyroglutamyl group from pGlu-|-His-Xaa tripeptides and pGlu-|-His-Xaa-Gly tetrapeptides.. Functionally, specific inactivation of TRH after its release. This Mus musculus (Mouse) protein is Thyrotropin-releasing hormone-degrading ectoenzyme (Trhde).